Here is a 454-residue protein sequence, read N- to C-terminus: COBRA-like protein 6 (454 aa).

An N-terminal signal peptide occupies residues 1 to 24 (MGAMLNLLLVVTVILCSILSPTRF). Asn-104, Asn-191, Asn-320, Asn-355, and Asn-391 each carry an N-linked (GlcNAc...) asparagine glycan. Ser-429 is lipidated: GPI-anchor amidated serine. Residues 430-454 (SSSSAVISSVSVVFCFLLHHLLLLV) constitute a propeptide, removed in mature form.

Belongs to the COBRA family. In terms of tissue distribution, expressed in flowers and siliques.

Its subcellular location is the cell membrane. This chain is COBRA-like protein 6 (COBL6), found in Arabidopsis thaliana (Mouse-ear cress).